Consider the following 466-residue polypeptide: Dihydrolipoyl dehydrogenase 3 (466 aa).

FAD-binding positions include 33–42 (EGRSTLGGTC), Lys-51, and Gly-115. A disulfide bridge connects residues Cys-42 and Cys-47. Residues 181 to 185 (GAGVI), Glu-204, Val-238, and 271 to 274 (AIGR) each bind NAD(+). FAD-binding residues include Asp-313 and Ala-321. Residue His-445 is the Proton acceptor of the active site.

It belongs to the class-I pyridine nucleotide-disulfide oxidoreductase family. In terms of assembly, homodimer. FAD is required as a cofactor.

Its subcellular location is the cytoplasm. It carries out the reaction N(6)-[(R)-dihydrolipoyl]-L-lysyl-[protein] + NAD(+) = N(6)-[(R)-lipoyl]-L-lysyl-[protein] + NADH + H(+). Its function is as follows. LPD-3 may substitute for lipoamide dehydrogenase of the 2-oxoglutarate dehydrogenase and pyruvate multienzyme complexes when the latter is inactive or missing. The sequence is that of Dihydrolipoyl dehydrogenase 3 (lpd3) from Pseudomonas putida (Arthrobacter siderocapsulatus).